Consider the following 245-residue polypeptide: Demethylmenaquinone methyltransferase (245 aa).

Residues Thr58, Asp79, and 106–107 (NA) each bind S-adenosyl-L-methionine.

The protein belongs to the class I-like SAM-binding methyltransferase superfamily. MenG/UbiE family.

It catalyses the reaction a 2-demethylmenaquinol + S-adenosyl-L-methionine = a menaquinol + S-adenosyl-L-homocysteine + H(+). It participates in quinol/quinone metabolism; menaquinone biosynthesis; menaquinol from 1,4-dihydroxy-2-naphthoate: step 2/2. Functionally, methyltransferase required for the conversion of demethylmenaquinol (DMKH2) to menaquinol (MKH2). The protein is Demethylmenaquinone methyltransferase of Halalkalibacterium halodurans (strain ATCC BAA-125 / DSM 18197 / FERM 7344 / JCM 9153 / C-125) (Bacillus halodurans).